Here is a 53-residue protein sequence, read N- to C-terminus: Conotoxin Cal9.2e (53 aa).

A propeptide spanning residues 1–6 (KKGVTQ) is cleaved from the precursor. Cystine bridges form between C15-C32, C20-C42, and C22-C47.

As to expression, expressed by the venom duct.

It is found in the secreted. Its function is as follows. Probable neurotoxin with unknown target. Possibly targets ion channels. This Californiconus californicus (California cone) protein is Conotoxin Cal9.2e.